We begin with the raw amino-acid sequence, 198 residues long: Ribonuclease HII (198 aa).

The RNase H type-2 domain occupies 11-198 (NLIAGVDEVG…GPVKRVLGLV (188 aa)). A divalent metal cation-binding residues include D17, E18, and D109.

Belongs to the RNase HII family. Requires Mn(2+) as cofactor. Mg(2+) serves as cofactor.

The protein resides in the cytoplasm. It carries out the reaction Endonucleolytic cleavage to 5'-phosphomonoester.. Functionally, endonuclease that specifically degrades the RNA of RNA-DNA hybrids. This Yersinia pseudotuberculosis serotype O:1b (strain IP 31758) protein is Ribonuclease HII.